Reading from the N-terminus, the 124-residue chain is UPF0231 protein Sbal223_3655 (124 aa).

It belongs to the UPF0231 family.

The chain is UPF0231 protein Sbal223_3655 from Shewanella baltica (strain OS223).